A 336-amino-acid chain; its full sequence is Glucokinase (336 aa).

13–18 (ADVGGT) is an ATP binding site.

The protein belongs to the bacterial glucokinase family.

Its subcellular location is the cytoplasm. The enzyme catalyses D-glucose + ATP = D-glucose 6-phosphate + ADP + H(+). The sequence is that of Glucokinase from Cupriavidus metallidurans (strain ATCC 43123 / DSM 2839 / NBRC 102507 / CH34) (Ralstonia metallidurans).